We begin with the raw amino-acid sequence, 198 residues long: Small ribosomal subunit protein uS7 (198 aa).

This sequence belongs to the universal ribosomal protein uS7 family. Part of the 30S ribosomal subunit.

One of the primary rRNA binding proteins, it binds directly to 16S rRNA where it nucleates assembly of the head domain of the 30S subunit. Is located at the subunit interface close to the decoding center. The sequence is that of Small ribosomal subunit protein uS7 from Desulfurococcus mucosus (Desulfurococcus mobilis).